Here is a 189-residue protein sequence, read N- to C-terminus: Probable nicotinate-nucleotide adenylyltransferase (189 aa).

Belongs to the NadD family.

The catalysed reaction is nicotinate beta-D-ribonucleotide + ATP + H(+) = deamido-NAD(+) + diphosphate. It participates in cofactor biosynthesis; NAD(+) biosynthesis; deamido-NAD(+) from nicotinate D-ribonucleotide: step 1/1. Catalyzes the reversible adenylation of nicotinate mononucleotide (NaMN) to nicotinic acid adenine dinucleotide (NaAD). This Staphylococcus aureus (strain N315) protein is Probable nicotinate-nucleotide adenylyltransferase.